The following is a 278-amino-acid chain: 4-deoxy-L-threo-5-hexosulose-uronate ketol-isomerase (278 aa).

H196, H198, E203, and H245 together coordinate Zn(2+).

Belongs to the KduI family. Zn(2+) serves as cofactor.

The catalysed reaction is 5-dehydro-4-deoxy-D-glucuronate = 3-deoxy-D-glycero-2,5-hexodiulosonate. It functions in the pathway glycan metabolism; pectin degradation; 2-dehydro-3-deoxy-D-gluconate from pectin: step 4/5. Its function is as follows. Catalyzes the isomerization of 5-dehydro-4-deoxy-D-glucuronate to 3-deoxy-D-glycero-2,5-hexodiulosonate. The chain is 4-deoxy-L-threo-5-hexosulose-uronate ketol-isomerase from Shigella flexneri serotype 5b (strain 8401).